Consider the following 437-residue polypeptide: Adenosylhomocysteinase (437 aa).

Residues threonine 58, aspartate 133, and glutamate 158 each contribute to the substrate site. Residue 159 to 161 coordinates NAD(+); that stretch reads TTT. Residues lysine 188 and aspartate 192 each coordinate substrate. NAD(+) contacts are provided by residues asparagine 193, 224–229, glutamate 245, 301–303, and asparagine 348; these read GDVGKG and VGH.

This sequence belongs to the adenosylhomocysteinase family. In terms of assembly, homotetramer. It depends on NAD(+) as a cofactor.

It carries out the reaction S-adenosyl-L-homocysteine + H2O = L-homocysteine + adenosine. It functions in the pathway amino-acid biosynthesis; L-homocysteine biosynthesis; L-homocysteine from S-adenosyl-L-homocysteine: step 1/1. Functionally, adenosylhomocysteine is a competitive inhibitor of S-adenosyl-L-methionine-dependent methyl transferase reactions; therefore adenosylhomocysteinase may play a key role in the control of methylations via regulation of the intracellular concentration of adenosylhomocysteine. This Caenorhabditis elegans protein is Adenosylhomocysteinase (ahcy-1).